A 316-amino-acid chain; its full sequence is Ribose-phosphate pyrophosphokinase (316 aa).

Residues 37–39 (DGE) and 96–97 (RQ) contribute to the ATP site. The Mg(2+) site is built by histidine 131 and aspartate 171. The active site involves lysine 195. D-ribose 5-phosphate contacts are provided by residues arginine 197, aspartate 221, and 225–229 (DTGGT).

This sequence belongs to the ribose-phosphate pyrophosphokinase family. Class I subfamily. In terms of assembly, homohexamer. It depends on Mg(2+) as a cofactor.

It localises to the cytoplasm. It carries out the reaction D-ribose 5-phosphate + ATP = 5-phospho-alpha-D-ribose 1-diphosphate + AMP + H(+). It functions in the pathway metabolic intermediate biosynthesis; 5-phospho-alpha-D-ribose 1-diphosphate biosynthesis; 5-phospho-alpha-D-ribose 1-diphosphate from D-ribose 5-phosphate (route I): step 1/1. Involved in the biosynthesis of the central metabolite phospho-alpha-D-ribosyl-1-pyrophosphate (PRPP) via the transfer of pyrophosphoryl group from ATP to 1-hydroxyl of ribose-5-phosphate (Rib-5-P). The polypeptide is Ribose-phosphate pyrophosphokinase (Haemophilus ducreyi (strain 35000HP / ATCC 700724)).